The chain runs to 160 residues: ATP synthase subunit b (160 aa).

Residues 5-27 (IEQILTQIIAFLIMLGVLKKFVW) form a helical membrane-spanning segment.

Belongs to the ATPase B chain family. As to quaternary structure, F-type ATPases have 2 components, F(1) - the catalytic core - and F(0) - the membrane proton channel. F(1) has five subunits: alpha(3), beta(3), gamma(1), delta(1), epsilon(1). F(0) has three main subunits: a(1), b(2) and c(10-14). The alpha and beta chains form an alternating ring which encloses part of the gamma chain. F(1) is attached to F(0) by a central stalk formed by the gamma and epsilon chains, while a peripheral stalk is formed by the delta and b chains.

It localises to the cell inner membrane. In terms of biological role, f(1)F(0) ATP synthase produces ATP from ADP in the presence of a proton or sodium gradient. F-type ATPases consist of two structural domains, F(1) containing the extramembraneous catalytic core and F(0) containing the membrane proton channel, linked together by a central stalk and a peripheral stalk. During catalysis, ATP synthesis in the catalytic domain of F(1) is coupled via a rotary mechanism of the central stalk subunits to proton translocation. Functionally, component of the F(0) channel, it forms part of the peripheral stalk, linking F(1) to F(0). This Protochlamydia amoebophila (strain UWE25) protein is ATP synthase subunit b.